We begin with the raw amino-acid sequence, 384 residues long: MAKRDYYEVLGVSKGASSDDIKKGYRRKAKELHPDRNKDDPNAEAQFKEANEAYEVLKDADKKAAYDRYGHAAFEGGMGGGGGGRPGGGFGGGQDFSSAFSDVFDDLFGNFAGGGQRGGGNRASRGSDLRYNLQINLEDAFSGLQKTINVPTSIGCKTCNGSGAEGGSEPSSCPTCSGMGKVRAQQGFFTVERTCPTCSGLGQIIKNPCKSCQGAGRVEKDRALSVNIPAGVETGTRIRLAGEGEAGMRGGPSGDLYIFIEVAEHELFQRDGTNLFCRVPVSMAKAALGGSIEVPTIDGGRGRVQIPSGSQSGRQMRLRGKGMPALRGGSSGDMFIELAVETPVNLTSRQKELLAEFDELSENNNPESSSFFSSVKSFWDSMKG.

In terms of domain architecture, J spans 5 to 70; it reads DYYEVLGVSK…DKKAAYDRYG (66 aa). The segment at 16 to 47 is disordered; that stretch reads ASSDDIKKGYRRKAKELHPDRNKDDPNAEAQF. Positions 31-47 are enriched in basic and acidic residues; that stretch reads ELHPDRNKDDPNAEAQF. The CR-type zinc finger occupies 143–221; the sequence is GLQKTINVPT…CQGAGRVEKD (79 aa). Positions 156, 159, 173, 176, 195, 198, 209, and 212 each coordinate Zn(2+). CXXCXGXG motif repeat units follow at residues 156–163, 173–180, 195–202, and 209–216; these read CKTCNGSG, CPTCSGMG, CPTCSGLG, and CKSCQGAG.

It belongs to the DnaJ family. In terms of assembly, homodimer. It depends on Zn(2+) as a cofactor.

It is found in the cytoplasm. In terms of biological role, participates actively in the response to hyperosmotic and heat shock by preventing the aggregation of stress-denatured proteins and by disaggregating proteins, also in an autonomous, DnaK-independent fashion. Unfolded proteins bind initially to DnaJ; upon interaction with the DnaJ-bound protein, DnaK hydrolyzes its bound ATP, resulting in the formation of a stable complex. GrpE releases ADP from DnaK; ATP binding to DnaK triggers the release of the substrate protein, thus completing the reaction cycle. Several rounds of ATP-dependent interactions between DnaJ, DnaK and GrpE are required for fully efficient folding. Also involved, together with DnaK and GrpE, in the DNA replication of plasmids through activation of initiation proteins. The protein is Chaperone protein DnaJ of Roseobacter denitrificans (strain ATCC 33942 / OCh 114) (Erythrobacter sp. (strain OCh 114)).